Here is a 575-residue protein sequence, read N- to C-terminus: Triokinase/FMN cyclase (575 aa).

Residues 9–336 (SVAGCADDAL…IDAETTAAAW (328 aa)) enclose the DhaK domain. Residues 56–59 (GSGH), Lys-109, and Asp-114 contribute to the dihydroxyacetone site. The Tele-hemiaminal-histidine intermediate role is filled by His-221. A disordered region spans residues 348–367 (KRSRVAPAEPQEAPDSTAAG). Ser-350 carries the post-translational modification Phosphoserine. Positions 372 to 571 (KRMALVLERV…AAAILRAILE (200 aa)) constitute a DhaL domain. ATP is bound by residues 401 to 404 (DGDC), 446 to 447 (SS), Gly-486, and 494 to 495 (TM). 2 positions are modified to phosphoserine: Ser-511 and Ser-545. 556–558 (DPG) is a binding site for ATP.

It belongs to the dihydroxyacetone kinase (DAK) family. Homodimer. Interacts with IFIH1 (via the CARD domains), the interaction is inhibited by viral infection. Requires Mg(2+) as cofactor. Mn(2+) is required as a cofactor. The cofactor is Co(2+). As to expression, detected in erythrocytes (at protein level).

The catalysed reaction is dihydroxyacetone + ATP = dihydroxyacetone phosphate + ADP + H(+). The enzyme catalyses D-glyceraldehyde + ATP = D-glyceraldehyde 3-phosphate + ADP + H(+). It carries out the reaction FAD = riboflavin cyclic-4',5'-phosphate + AMP + H(+). With respect to regulation, each activity is inhibited by the substrate(s) of the other. In terms of biological role, catalyzes both the phosphorylation of dihydroxyacetone and of glyceraldehyde, and the splitting of ribonucleoside diphosphate-X compounds among which FAD is the best substrate. Represses IFIH1-mediated cellular antiviral response. In Homo sapiens (Human), this protein is Triokinase/FMN cyclase.